Here is a 214-residue protein sequence, read N- to C-terminus: Immunoglobulin lambda-like polypeptide 5 (214 aa).

Residues 1 to 35 (MRPKTGQVGCETPEELGPGPRQRWPLLLLGLAMVA) form the signal peptide. Residues 98-109 (VFGTGTKVTVLG) form a j region region. The interval 110-214 (QPKANPTVTL…EKTVAPTECS (105 aa)) is c region. The 95-residue stretch at 115–209 (PTVTLFPPSS…EGSTVEKTVA (95 aa)) folds into the Ig-like C1-type domain. A disulfide bridge links Cys136 with Cys195.

In terms of tissue distribution, contrary to IGLL1, not expressed in pre-B-cells.

Its subcellular location is the secreted. This Homo sapiens (Human) protein is Immunoglobulin lambda-like polypeptide 5 (IGLL5).